The following is a 378-amino-acid chain: Lipid-A-disaccharide synthase (378 aa).

It belongs to the LpxB family.

The enzyme catalyses a lipid X + a UDP-2-N,3-O-bis[(3R)-3-hydroxyacyl]-alpha-D-glucosamine = a lipid A disaccharide + UDP + H(+). It functions in the pathway bacterial outer membrane biogenesis; LPS lipid A biosynthesis. In terms of biological role, condensation of UDP-2,3-diacylglucosamine and 2,3-diacylglucosamine-1-phosphate to form lipid A disaccharide, a precursor of lipid A, a phosphorylated glycolipid that anchors the lipopolysaccharide to the outer membrane of the cell. This is Lipid-A-disaccharide synthase from Pseudomonas paraeruginosa (strain DSM 24068 / PA7) (Pseudomonas aeruginosa (strain PA7)).